The sequence spans 418 residues: Glutamyl-tRNA reductase (418 aa).

Substrate-binding positions include 49–52, Ser-109, 114–116, and Gln-120; these read TCNR and EPQ. Cys-50 serves as the catalytic Nucleophile. 189-194 is a binding site for NADP(+); that stretch reads GAGETI.

The protein belongs to the glutamyl-tRNA reductase family. Homodimer.

The catalysed reaction is (S)-4-amino-5-oxopentanoate + tRNA(Glu) + NADP(+) = L-glutamyl-tRNA(Glu) + NADPH + H(+). It participates in porphyrin-containing compound metabolism; protoporphyrin-IX biosynthesis; 5-aminolevulinate from L-glutamyl-tRNA(Glu): step 1/2. Its function is as follows. Catalyzes the NADPH-dependent reduction of glutamyl-tRNA(Glu) to glutamate 1-semialdehyde (GSA). In Klebsiella pneumoniae (strain 342), this protein is Glutamyl-tRNA reductase.